A 313-amino-acid chain; its full sequence is Malate dehydrogenase (313 aa).

Residues 8 to 13 (GAGNVG) and Asp33 contribute to the NAD(+) site. Substrate is bound by residues Arg83 and Arg89. NAD(+) is bound by residues Asn96 and 119 to 121 (ISN). Residues Asn121 and Arg152 each coordinate substrate. The Proton acceptor role is filled by His176.

Belongs to the LDH/MDH superfamily. MDH type 3 family.

The catalysed reaction is (S)-malate + NAD(+) = oxaloacetate + NADH + H(+). In terms of biological role, catalyzes the reversible oxidation of malate to oxaloacetate. In Bacteroides fragilis (strain ATCC 25285 / DSM 2151 / CCUG 4856 / JCM 11019 / LMG 10263 / NCTC 9343 / Onslow / VPI 2553 / EN-2), this protein is Malate dehydrogenase.